Reading from the N-terminus, the 209-residue chain is ATP synthase subunit O, mitochondrial (209 aa).

It belongs to the ATPase delta chain family. As to quaternary structure, F-type ATPases have 2 components, CF(1) - the catalytic core - and CF(0) - the membrane proton channel. CF(1) has five subunits: alpha(3), beta(3), gamma(1), delta(1), epsilon(1). CF(0) has three main subunits: a, b and c.

It localises to the mitochondrion. The protein resides in the mitochondrion inner membrane. Functionally, mitochondrial membrane ATP synthase (F(1)F(0) ATP synthase or Complex V) produces ATP from ADP in the presence of a proton gradient across the membrane which is generated by electron transport complexes of the respiratory chain. F-type ATPases consist of two structural domains, F(1) - containing the extramembraneous catalytic core and F(0) - containing the membrane proton channel, linked together by a central stalk and a peripheral stalk. During catalysis, ATP synthesis in the catalytic domain of F(1) is coupled via a rotary mechanism of the central stalk subunits to proton translocation. Part of the complex F(0) domain and the peripheric stalk, which acts as a stator to hold the catalytic alpha(3)beta(3) subcomplex and subunit a/ATP6 static relative to the rotary elements. In Drosophila melanogaster (Fruit fly), this protein is ATP synthase subunit O, mitochondrial.